Reading from the N-terminus, the 883-residue chain is Valine--tRNA ligase (883 aa).

The 'HIGH' region motif lies at 50 to 60 (PNVTGKLHMGH). Residues 527-531 (KMSKS) carry the 'KMSKS' region motif. Residue K530 participates in ATP binding. A coiled-coil region spans residues 811–883 (LNELIDLDEE…KQRLEQLQRA (73 aa)). The tract at residues 859–883 (QRTKRSDFEDQLTSTKQRLEQLQRA) is disordered.

The protein belongs to the class-I aminoacyl-tRNA synthetase family. ValS type 1 subfamily. In terms of assembly, monomer.

The protein localises to the cytoplasm. The catalysed reaction is tRNA(Val) + L-valine + ATP = L-valyl-tRNA(Val) + AMP + diphosphate. Its function is as follows. Catalyzes the attachment of valine to tRNA(Val). As ValRS can inadvertently accommodate and process structurally similar amino acids such as threonine, to avoid such errors, it has a 'posttransfer' editing activity that hydrolyzes mischarged Thr-tRNA(Val) in a tRNA-dependent manner. This chain is Valine--tRNA ligase, found in Lacticaseibacillus casei (Lactobacillus casei).